The sequence spans 114 residues: Anti-adapter protein IraM (114 aa).

The protein belongs to the IraM/RssC family.

Its subcellular location is the cytoplasm. In terms of biological role, involved in the stabilization of the sigma stress factor RpoS. The chain is Anti-adapter protein IraM from Citrobacter koseri (strain ATCC BAA-895 / CDC 4225-83 / SGSC4696).